A 1734-amino-acid polypeptide reads, in one-letter code: MGQTVTTPLSLTLEHWEDVQRIASNQSVDVKKRRWVTFCSAEWPTFGVGWPQDGTFNLDIILQVKSKVFSPGPHGHPDQVPYIVTWEAIAYEPPPWVKPFVSPKLSPSPTAPILPSGPSTQPPPRSALYPALTPSIKPRPSKPQVLSDNGGPLIDLLSEDPPPYGGQGLSSSDGDGDREEATSTSEIPAPSPIVSRLRGKRDPPAADSTTSRAFPLRLGGNGQLQYWPFSSSDLYNWKNNNPSFSEDPGKLTALIESVLTTHQPTWDDCQQLLGTLLTGEEKQRVLLEARKAVRGNDGRPTQLPNEVDAAFPLERPDWDYTTQRGRNHLVLYRQLLLAGLQNAGRSPTNLAKVKGITQGPNESPSAFLERLKEAYRRYTPYDPEDPGQETNVSMSFIWQSAPDIGRKLERLEDLKSKTLGDLVREAERIFNKRETPEEREERVRRETEEKEERRRAEEEQKEKERDRRRHREMSKLLATVVSGQRQDRQGGERRRPQLDKDQCAYCKEKGHWAKDCPKKPRGPRGPRPQTSLLTLDDQGGQGQEPPPEPRITLTVGGQPVTFLVDTGAQHSVLTQNPGPLSDRSAWVQGATGGKRYRWTTDRKVHLATGKVTHSFLHVPDCPYPLLGRDLLTKLKAQIHFEGSGAQVVGPKGQPLQVLTLNLEDEYRLYETSAEPEVSPGSTWLSDFPQAWAETGGMGLAVRQAPLIIPLKATSTPVSIKQYPMSQEAKLGIKPHIQRLLDQGILVPCQSPWNTPLLPVKKPGTNDYRPVQDLREVNKRVEDIHPTVPNPYNLLSGLPPSHRWYTVLDLKDAFFCLRLHPTSQPLFAFEWRDPGMGISGQLTWTRLPQGFKNSPTLFDEALHRDLADFRIQHPDLILLQYVDDILLAATSELDCQQGTRALLLTLGNLGYRASAKKAQLCQKQVKYLGYLLKEGQRWLTEARKETVMGQPTPKTPRQLREFLGTAGFCRLWIPGFAEMAAPLYPLTKTGTLFNWGPDQQKAYQEIKQALLTAPALGLPDLTKPFELFVDEKQGYAKGVLTQKLGPWRRPVAYLSKKLDPVAAGWPPCLRMVAAIAVLRKDAGKLTMGQPLVILAPHAVEALVKQPPDRWLSNARMTHYQAMLLDTDRVQFGPVVALNPATLLPLPEEGAPHDCLEILAETHGTRPDLTDQPIPDADHTWYTDGSSFLQEGQRKAGAAVTTETEVIWARALPAGTSAQRAELIALTQALKMAEGKRLNVYTDSRYAFATAHIHGEIYRRRGLLTSEGREIKNKSEILALLKALFLPKRLSIIHCLGHQKGDSAEARGNRLADQAAREAAIKTPPDTSTLLIEDSTPYTPAYFHYTETDLKKLRELGATYNQSKGYWVFQGKPVMPDQFVFELLDSLHRLTHLGYQKMKALLDRGESPYYMLNRDKTLQYVADSCTVCAQVNASKAKIGAGVRVRGHRPGSHWEIDFTEVKPGLYGYKYLLVFVDTFSGWVEAFPTKRETARVVSKKLLEEIFPRFGMPQVLGSDNGPAFTSQVSQSVADLLGIDWKLHCAYRPQSSGQVERMNRTIKETLTKLTLAAGTRDWVLLLPLALYRARNTPGPHGLTPYEILYGAPPPLVNFHDPDMSELTNSPSLQAHLQALQTVQREIWKPLAEAYRDQLDQPVIPHPFRIGDSVWVRRHQTKNLEPRWKGPYTVLLTTPTALKVDGISAWIHAAHVKAATTPPIKPSWRVQRSQNPLKIRLTRGAP.

Residue Gly-2 is the site of N-myristoyl glycine; by host attachment. Residues 107-217 are disordered; it reads PSPTAPILPS…STTSRAFPLR (111 aa). The PTAP/PSAP motif motif lies at 109–112; it reads PTAP. An LYPX(n)L motif motif is present at residues 128–132; sequence LYPAL. The PPXY motif signature appears at 161 to 164; it reads PPPY. A Phosphoserine; by host modification is found at Ser-191. An interaction with host PIAS4 region spans residues 344–392; sequence GRSPTNLAKVKGITQGPNESPSAFLERLKEAYRRYTPYDPEDPGQETNV. The interval 429–434 is interaction with host UBE2I; the sequence is IFNKRE. Basic and acidic residues-rich tracts occupy residues 434-465 and 485-498; these read ETPE…EKER and RQDR…RPQL. Disordered stretches follow at residues 434-498 and 512-552; these read ETPE…RPQL and WAKD…PRIT. Residues 437 to 478 adopt a coiled-coil conformation; the sequence is EEREERVRRETEEKEERRRAEEEQKEKERDRRRHREMSKLLA. The CCHC-type zinc finger occupies 501–518; it reads DQCAYCKEKGHWAKDCPK. The Peptidase A2 domain maps to 560 to 630; it reads VTFLVDTGAQ…CPYPLLGRDL (71 aa). The Protease; shared with dimeric partner role is filled by Asp-565. One can recognise a Reverse transcriptase domain in the interval 740–931; the sequence is LDQGILVPCQ…KQVKYLGYLL (192 aa). The Mg(2+) site is built by Asp-808, Asp-882, Asp-883, Asp-1182, Glu-1220, Asp-1241, and Asp-1311. The 147-residue stretch at 1173–1319 folds into the RNase H type-1 domain; sequence PDADHTWYTD…ADQAAREAAI (147 aa). The HHCC-type zinc finger occupies 1386–1426; it reads HRLTHLGYQKMKALLDRGESPYYMLNRDKTLQYVADSCTVC. Residues 1443 to 1601 enclose the Integrase catalytic domain; it reads RGHRPGSHWE…TPYEILYGAP (159 aa). Asp-1454 and Asp-1513 together coordinate Mg(2+).

The protein belongs to the retroviral Pol polyprotein family. As to quaternary structure, homohexamer; further associates as homomultimer. The virus core is composed of a lattice formed from hexagonal rings, each containing six capsid monomers. In terms of assembly, interacts (via PPXY motif) with host NEDD4. Interacts (via PSAP motif) with host TSG101. Interacts (via LYPX(n)L motif) with host PDCD6IP. The reverse transcriptase is a monomer (Potential). Interacts (via RNase domains) with host release factor ETF1; this interaction is essential for translational readthrough of amber codon between viral gag and pol genes, as well as for viral replication. As to quaternary structure, homodimer. It depends on Mg(2+) as a cofactor. Post-translationally, ubiquitinated by ITCH. Gag can recruit the ubiquitin ligase Itch in an L domain-independent manner to facilitate virus release via a mechanism that involves Gag ubiquitination. Specific enzymatic cleavages by the viral protease yield mature proteins. The protease is released by autocatalytic cleavage. The polyprotein is cleaved during and after budding, this process is termed maturation. In terms of processing, sumoylated; which is required for virus replication. Post-translationally, phosphorylated on serine residues.

It is found in the virion. Its subcellular location is the host cell membrane. It localises to the host late endosome membrane. The protein resides in the host endosome. The protein localises to the host multivesicular body. It is found in the host cytoplasm. The enzyme catalyses DNA(n) + a 2'-deoxyribonucleoside 5'-triphosphate = DNA(n+1) + diphosphate. It catalyses the reaction Endonucleolytic cleavage to 5'-phosphomonoester.. Most efficiently inhibited by Amprenavir, which is able to block Gag-Pol processing in infected cells. Plays a role in budding and is processed by the viral protease during virion maturation outside the cell. During budding, it recruits, in a PPXY-dependent or independent manner, Nedd4-like ubiquitin ligases that conjugate ubiquitin molecules to Gag-Pol, or to Gag-Pol binding host factors. Interaction with HECT ubiquitin ligases probably link the viral protein to the host ESCRT pathway and facilitates release. In terms of biological role, targets Gag and gag-pol polyproteins to the plasma membrane via a multipartite membrane binding signal, that includes its myristoylated N-terminus. Also mediates nuclear localization of the pre-integration complex. Functionally, constituent of the pre-integration complex (PIC) which tethers the latter to mitotic chromosomes. This allows the integration of the viral genome into the host DNA. Its function is as follows. Forms the spherical core of the virion that encapsulates the genomic RNA-nucleocapsid complex. Involved in the packaging and encapsidation of two copies of the genome. Binds with high affinity to conserved UCUG elements within the packaging signal, located near the 5'-end of the genome. This binding is dependent on genome dimerization. Acts as a nucleic acid chaperone which is involved in rearrangement of nucleic acid secondary structures during gRNA retrotranscription. In terms of biological role, the aspartyl protease mediates proteolytic cleavages of Gag and Gag-Pol polyproteins during or shortly after the release of the virion from the plasma membrane. Cleavages take place as an ordered, step-wise cascade to yield mature proteins. This process is called maturation. Displays maximal activity during the budding process just prior to particle release from the cell (Potential). Cleaves the translation initiation factor eIF4G leading to the inhibition of host cap-dependent translation. Functionally, RT is a multifunctional enzyme that converts the viral dimeric RNA genome into dsDNA in the cytoplasm, shortly after virus entry into the cell. This enzyme displays a DNA polymerase activity that can copy either DNA or RNA templates, and a ribonuclease H (RNase H) activity that cleaves the RNA strand of RNA-DNA heteroduplexes in a partially processive 3' to 5' endonucleasic mode. Conversion of viral genomic RNA into dsDNA requires many steps. A tRNA binds to the primer-binding site (PBS) situated at the 5' end of the viral RNA. RT uses the 3' end of the tRNA primer to perform a short round of RNA-dependent minus-strand DNA synthesis. The reading proceeds through the U5 region and ends after the repeated (R) region which is present at both ends of viral RNA. The portion of the RNA-DNA heteroduplex is digested by the RNase H, resulting in a ssDNA product attached to the tRNA primer. This ssDNA/tRNA hybridizes with the identical R region situated at the 3' end of viral RNA. This template exchange, known as minus-strand DNA strong stop transfer, can be either intra- or intermolecular. RT uses the 3' end of this newly synthesized short ssDNA to perform the RNA-dependent minus-strand DNA synthesis of the whole template. RNase H digests the RNA template except for a polypurine tract (PPT) situated at the 5' end of the genome. It is not clear if both polymerase and RNase H activities are simultaneous. RNase H probably can proceed both in a polymerase-dependent (RNA cut into small fragments by the same RT performing DNA synthesis) and a polymerase-independent mode (cleavage of remaining RNA fragments by free RTs). Secondly, RT performs DNA-directed plus-strand DNA synthesis using the PPT that has not been removed by RNase H as primers. PPT and tRNA primers are then removed by RNase H. The 3' and 5' ssDNA PBS regions hybridize to form a circular dsDNA intermediate. Strand displacement synthesis by RT to the PBS and PPT ends produces a blunt ended, linear dsDNA copy of the viral genome that includes long terminal repeats (LTRs) at both ends. Its function is as follows. Catalyzes viral DNA integration into the host chromosome, by performing a series of DNA cutting and joining reactions. This enzyme activity takes place after virion entry into a cell and reverse transcription of the RNA genome in dsDNA. The first step in the integration process is 3' processing. This step requires a complex comprising the viral genome, matrix protein and integrase. This complex is called the pre-integration complex (PIC). The integrase protein removes 2 nucleotides from each 3' end of the viral DNA, leaving recessed CA OH's at the 3' ends. In the second step that requires cell division, the PIC enters cell nucleus. In the third step, termed strand transfer, the integrase protein joins the previously processed 3' ends to the 5' ends of strands of target cellular DNA at the site of integration. The last step is viral DNA integration into host chromosome. This AKV murine leukemia virus (AKR (endogenous) murine leukemia virus) protein is Gag-Pol polyprotein (pol).